Here is a 122-residue protein sequence, read N- to C-terminus: Basic phospholipase A2 (122 aa).

7 cysteine pairs are disulfide-bonded: Cys26–Cys115, Cys28–Cys44, Cys43–Cys95, Cys49–Cys122, Cys50–Cys88, Cys57–Cys81, and Cys75–Cys86. Ca(2+)-binding residues include Tyr27, Gly29, and Gly31. The active site involves His47. Residue Asp48 coordinates Ca(2+). The active site involves Asp89.

This sequence belongs to the phospholipase A2 family. Group II subfamily. D49 sub-subfamily. Ca(2+) is required as a cofactor. In terms of tissue distribution, expressed by the venom gland.

It localises to the secreted. It carries out the reaction a 1,2-diacyl-sn-glycero-3-phosphocholine + H2O = a 1-acyl-sn-glycero-3-phosphocholine + a fatty acid + H(+). Functionally, snake venom phospholipase A2 (PLA2) that does not inhibit platelet aggregation. Exhibits cytotoxic and anticoagulant activity. Induces Ehrlich tumor growth but not angiogenesis. PLA2 catalyzes the calcium-dependent hydrolysis of the 2-acyl groups in 3-sn-phosphoglycerides. The sequence is that of Basic phospholipase A2 from Bothrops leucurus (Whitetail lancehead).